Here is a 491-residue protein sequence, read N- to C-terminus: Serine/threonine-protein kinase 3/4 (491 aa).

The tract at residues 1 to 24 (MEEVQRRQHPHPRRSLKKLSEDSL) is disordered. Residues 7–17 (RQHPHPRRSLK) are compositionally biased toward basic residues. Residues 32 to 283 (FDVLEKLGEG…ATQLLQHPFI (252 aa)) enclose the Protein kinase domain. Residues 38–46 (LGEGSYGSV) and Lys-61 contribute to the ATP site. Catalysis depends on Asp-151, which acts as the Proton acceptor. Thr-185 is modified (phosphothreonine; by autocatalysis). Residues 292-334 (LRDLITDMMEIKLKRQEEQQRDLDQDDEENSEEDDMDSGTMVR) adopt a coiled-coil conformation. Disordered stretches follow at residues 307 to 394 (QEEQ…IQQS) and 406 to 435 (EKENQANSHSNRNAQALQNSSDNWKVPQDG). A compositionally biased stretch (acidic residues) spans 315–328 (DQDDEENSEEDDMD). Polar residues-rich tracts occupy residues 363-373 (TLDSQMGTMVI) and 410-428 (QANSHSNRNAQALQNSSDN). The SARAH domain maps to 437–484 (FESLKSWSVEELQRRLASLDPTMEQEIEEIRQRYQAKRQPILDAIDAK). The stretch at 442–475 (SWSVEELQRRLASLDPTMEQEIEEIRQRYQAKRQ) forms a coiled coil.

It belongs to the protein kinase superfamily. STE Ser/Thr protein kinase family. STE20 subfamily. As to quaternary structure, homodimer; mediated via the coiled-coil region. It depends on Mg(2+) as a cofactor. Proteolytically cleaved by caspase-3 during apoptosis at Asp-328 resulting in a 37 kDa form. Proteolytic cleavage results in kinase activation and nuclear translocation of the truncated form (MST1/N).

It localises to the cytoplasm. The protein localises to the nucleus. The enzyme catalyses L-seryl-[protein] + ATP = O-phospho-L-seryl-[protein] + ADP + H(+). It catalyses the reaction L-threonyl-[protein] + ATP = O-phospho-L-threonyl-[protein] + ADP + H(+). Its activity is regulated as follows. Inhibited by the C-terminal non-catalytic region. Activated by caspase-cleavage. Full activation also requires homodimerization and autophosphorylation of Thr-185. Its function is as follows. Stress-activated, pro-apoptotic kinase which, following caspase-cleavage, enters the nucleus and induces chromatin condensation followed by internucleosomal DNA fragmentation. Key component of the Hippo signaling pathway which plays a pivotal role in organ size control and tumor suppression by restricting proliferation and promoting apoptosis. The core of this pathway is composed of a kinase cascade wherein stk3/mst2 and stk4/mst1, in complex with its regulatory protein sav1, phosphorylates and activates lats1/2 in complex with its regulatory protein mob1, which in turn phosphorylates and inactivates yap1 oncoprotein and wwtr1/taz. Phosphorylation of yap1 by lats2 inhibits its translocation into the nucleus to regulate cellular genes important for cell proliferation, cell death, and cell migration. Phosphorylates 'Ser-14' of histone H2B (H2BS14ph) during apoptosis. The polypeptide is Serine/threonine-protein kinase 3/4 (STK4) (Squalus acanthias (Spiny dogfish)).